The primary structure comprises 105 residues: Thioredoxin (105 aa).

The 104-residue stretch at 2–105 (VKQIESKYAF…KLEATINELI (104 aa)) folds into the Thioredoxin domain. An N6-acetyllysine modification is found at Lys3. Lys8 carries the post-translational modification N6-succinyllysine. Residues Cys32 and Cys35 each act as nucleophile in the active site. Cys32 and Cys35 form a disulfide bridge. The residue at position 39 (Lys39) is an N6-acetyllysine. 2 positions are modified to S-nitrosocysteine: Cys62 and Cys69. Cys73 carries the post-translational modification S-nitrosocysteine; alternate. The residue at position 94 (Lys94) is an N6-acetyllysine; alternate. Lys94 is modified (N6-succinyllysine; alternate).

This sequence belongs to the thioredoxin family. Homodimer; disulfide-linked. Interacts with TXNIP through the redox-active site. Interacts with MAP3K5 and CASP3. Interacts with APEX1; the interaction stimulates the FOS/JUN AP-1 DNA-binding activity in a redox-dependent manner. In the fully reduced protein, both Cys-69 and Cys-73 are nitrosylated in response to nitric oxide (NO). When two disulfide bonds are present in the protein, only Cys-73 is nitrosylated. Cys-73 can serve as donor for nitrosylation of target proteins.

It is found in the nucleus. The protein resides in the cytoplasm. It localises to the secreted. In terms of biological role, participates in various redox reactions through the reversible oxidation of its active center dithiol to a disulfide and catalyzes dithiol-disulfide exchange reactions. Plays a role in the reversible S-nitrosylation of cysteine residues in target proteins, and thereby contributes to the response to intracellular nitric oxide. Nitrosylates the active site Cys of CASP3 in response to nitric oxide (NO), and thereby inhibits caspase-3 activity. Induces the FOS/JUN AP-1 DNA binding activity in ionizing radiation (IR) cells through its oxidation/reduction status and stimulates AP-1 transcriptional activity. The protein is Thioredoxin (TXN) of Ovis aries (Sheep).